We begin with the raw amino-acid sequence, 210 residues long: Large ribosomal subunit protein uL4 (210 aa).

Polar residues predominate over residues 44–54; the sequence is QRQGTASTLTR. Residues 44 to 96 form a disordered region; the sequence is QRQGTASTLTRSEVRGGGRKPYKQKGTGRARQGSIRTPLRPGGGVIFGPKPRS. A compositionally biased stretch (basic residues) spans 60–71; sequence GGRKPYKQKGTG.

Belongs to the universal ribosomal protein uL4 family. In terms of assembly, part of the 50S ribosomal subunit.

One of the primary rRNA binding proteins, this protein initially binds near the 5'-end of the 23S rRNA. It is important during the early stages of 50S assembly. It makes multiple contacts with different domains of the 23S rRNA in the assembled 50S subunit and ribosome. Its function is as follows. Forms part of the polypeptide exit tunnel. The sequence is that of Large ribosomal subunit protein uL4 from Prochlorococcus marinus (strain MIT 9515).